The primary structure comprises 815 residues: Cell division cycle protein 48 (815 aa).

Residues 1–30 (MNAPSTMTDKKPEVEHLQGENPPKDTYSAE) are disordered. Residues 8-18 (TDKKPEVEHLQ) are compositionally biased toward basic and acidic residues. ATP-binding positions include 267–273 (PGTGKTL), asparagine 368, histidine 404, and 541–546 (GTGKTL). A disordered region spans residues 794–815 (DSADSNTNGPSFGNDGADDLYA). A compositionally biased stretch (polar residues) spans 795-804 (SADSNTNGPS).

This sequence belongs to the AAA ATPase family. Component of the ribosome quality control complex (RQC), composed of the E3 ubiquitin ligase rkr1/ltn1, rqc1 and mtr1/rqc2, as well as cdc48 and its ubiquitin-binding cofactors. RQC forms a stable complex with 60S ribosomal subunits. Interacts with ubx2 and ubx3. Interacts with lub1. Interacts with rbd2 (via C-terminal SHP box); the interaction is required for rbd2-mediated cleavage of sre1 and sre2.

The protein resides in the cytoplasm. Its subcellular location is the nucleus. The catalysed reaction is ATP + H2O = ADP + phosphate + H(+). The first ATP-binding region has low ATPase activity. The second ATP-binding region is responsible for ATPase activity. ATP binding to the first ATP-binding region induces intrinsic activity of the second ATP-binding region. While ATP binding to the first ATP-binding region appears to prevent ATP hydrolysis by the second ATP-binding region, ADP-binding to first region promotes the coordinate and cooperative ATPase cycle of the second ATP-binding region. ATP binding to the first ATP-binding region induces a conformational change, promoting the rotation of the first ATP-binding region relative to the second ATP-binding region in the hexamer. ATP-dependent chaperone which probably uses the energy provided by ATP hydrolysis to generate mechanical force to unfold substrate proteins, disassemble protein complexes, and disaggregate protein aggregates. By recruiting and promoting the degradation of ubiquitinated proteins, plays a role in the ubiquitin fusion degradation (UFD) pathway. Has a role in the endoplasmic reticulum-associated degradation (ERAD) pathway which mediates the cytoplasmic elimination of misfolded proteins exported from the ER. Involved in spindle disassembly. Component of the ribosome quality control complex (RQC), a ribosome-associated complex that mediates ubiquitination and extraction of incompletely synthesized nascent chains for proteasomal degradation. CDC48 may provide the mechanical force that dislodges the polyubiquitinated nascent peptides from the exit channel. Required for ribophagy, a process which relocalizes ribosomal particles into the vacuole for degradation in response to starvation. Has a role in substrate recognition mediating rbd2-dependent cleavage of sterol regulatory element-binding protein sre1 and sre2. This Schizosaccharomyces pombe (strain 972 / ATCC 24843) (Fission yeast) protein is Cell division cycle protein 48.